We begin with the raw amino-acid sequence, 612 residues long: Proton pump-interactor 1 (612 aa).

The tract at residues 1–58 is disordered; sequence MGVEVVNSGGFEVAPAPFEGKPEKNGKLDQGKGDDAPINFGSVGELPKNAEENNNKVV. Residues 20-35 show a composition bias toward basic and acidic residues; sequence GKPEKNGKLDQGKGDD. Coiled-coil stretches lie at residues 90–113 and 251–314; these read PKIKAKLDLADKELEKLNKARTGV and LDGV…NSEY. Basic and acidic residues-rich tracts occupy residues 374–387, 434–446, 459–498, and 505–519; these read LSRDGRMRNPDEKP, EKAKDAVKVKNVA, PQKEEKPVDAATAKEMRKQEEIAKAKQAMERKKKLAEKAA, and AQKEAEKKEKKEQEK. Residues 374 to 572 form a disordered region; sequence LSRDGRMRNP…PIRNRTRGRG (199 aa). Residues 466–526 are a coiled coil; the sequence is VDAATAKEMR…QEKKAKKKTG (61 aa). Residues 531–545 are compositionally biased toward acidic residues; that stretch reads TETEEVPEASEEEIE. A Phosphoserine modification is found at Ser-540. Residues 549 to 564 are compositionally biased toward basic and acidic residues; that stretch reads QEEKPQKEKVFKEKPI. A helical membrane pass occupies residues 591 to 611; the sequence is VYAAPAALVVLLLLVLGYYYV.

This sequence belongs to the plant Proton pump-interactor protein family. Interacts with AHA1 via N-terminal region. In terms of tissue distribution, strongly expressed in root and shoot vascular systems, particularly in meristematic and sink tissues. Also present in pollen, stigmas and siliques, but not in developing embryos.

The protein localises to the cell membrane. It is found in the endoplasmic reticulum membrane. Its function is as follows. Promotes AHA1 plasma membrane ATPase activity by binding to a site different from the 14-3-3 binding site. In Arabidopsis thaliana (Mouse-ear cress), this protein is Proton pump-interactor 1 (PPI1).